The primary structure comprises 479 residues: 6-phosphogluconate dehydrogenase, decarboxylating (479 aa).

Residues 10–15 (GLAVMG), 33–35 (NRS), 75–77 (IKA), and Asn103 contribute to the NADP(+) site. Residues Asn103 and 129 to 131 (SGG) each bind substrate. The Proton acceptor role is filled by Lys183. 186–187 (HN) serves as a coordination point for substrate. Glu190 functions as the Proton donor in the catalytic mechanism. The substrate site is built by Tyr191, Lys260, Arg287, Arg447, and His453.

Belongs to the 6-phosphogluconate dehydrogenase family. As to quaternary structure, homodimer.

It catalyses the reaction 6-phospho-D-gluconate + NADP(+) = D-ribulose 5-phosphate + CO2 + NADPH. The protein operates within carbohydrate degradation; pentose phosphate pathway; D-ribulose 5-phosphate from D-glucose 6-phosphate (oxidative stage): step 3/3. In terms of biological role, catalyzes the oxidative decarboxylation of 6-phosphogluconate to ribulose 5-phosphate and CO(2), with concomitant reduction of NADP to NADPH. The chain is 6-phosphogluconate dehydrogenase, decarboxylating (gnd) from Chlamydia muridarum (strain MoPn / Nigg).